We begin with the raw amino-acid sequence, 603 residues long: Aquaporin-2 (603 aa).

A helical transmembrane segment spans residues 40–70 (SLKKYKYNLFFEFIGSFLFVFFISIYMLNSN). Composition is skewed to basic and acidic residues over residues 135–149 (NNKSKREVERDDDKI) and 156–190 (EFEKDNEKKKNYDNINEKEISTTSDGKIKDMEDPK). Residues 135–200 (NNKSKREVER…NISNKNENYD (66 aa)) are disordered. The span at 191–200 (NISNKNENYD) shows a compositional bias: polar residues. A run of 5 helical transmembrane segments spans residues 282 to 299 (HAIYSFVGCFIYVIFILL), 321 to 346 (FALSTLYITFQYFGGIVASIICAHLY), 360 to 393 (IIKTFLCEFISTFLITLLLLSLYNYKKKFMEENK), 442 to 471 (NKYIKYIMNHIFYLLFIFFSLLFFVFVTNT), and 509 to 542 (ITKIFQLLIFYIQSLPLWIGPYFGSAFAATFLSL).

The protein belongs to the MIP/aquaporin (TC 1.A.8) family.

The protein localises to the endomembrane system. It catalyses the reaction H2O(in) = H2O(out). The catalysed reaction is glycerol(in) = glycerol(out). In terms of biological role, required for sporozoite development in the mosquito vector. This is Aquaporin-2 from Plasmodium falciparum (isolate NF54).